A 68-amino-acid chain; its full sequence is Large ribosomal subunit protein uL29 (68 aa).

The protein belongs to the universal ribosomal protein uL29 family.

In Geobacillus sp. (strain WCH70), this protein is Large ribosomal subunit protein uL29.